The chain runs to 647 residues: Meiotically up-regulated protein C8C9.04 (647 aa).

Disordered regions lie at residues 1-241 and 387-647; these read MTTN…ELKP and RAQQ…KLFH. Over residues 29 to 46 the composition is skewed to polar residues; sequence KSTNAVEQNNNSSQASVT. The span at 49–67 shows a compositional bias: basic residues; that stretch reads NKKKAAKRAKKKAAKKKKQ. The segment covering 92–103 has biased composition (polar residues); that stretch reads TILQEPGFTQTI. Positions 134–145 are enriched in low complexity; that stretch reads PSASTSTAVPTT. Residues 146–155 show a composition bias toward polar residues; that stretch reads EARNTSITEP. Over residues 156–177 the composition is skewed to low complexity; that stretch reads ANSPSSSSSSASTKSTATTQSA. A phosphoserine mark is found at S162 and S165. T168 carries the phosphothreonine modification. Over residues 193-215 the composition is skewed to polar residues; the sequence is QLGNSPASITSKPATTSAAQPSS. Residues S197 and S200 each carry the phosphoserine modification. Basic and acidic residues predominate over residues 232–241; sequence AEKEIPELKP. Composition is skewed to polar residues over residues 390–406, 413–432, and 488–508; these read QPEQ…TETV, VSST…TESE, and PSST…AQSS. S396 bears the Phosphoserine mark. S489 and S490 each carry phosphoserine. T491 is subject to Phosphothreonine. Phosphoserine occurs at positions 515, 519, and 523. The segment covering 518–530 has biased composition (low complexity); sequence ASAPSSPGTTSAA. Polar residues predominate over residues 561 to 589; sequence GSATTIPSPGSATTKPTPGSATTKPTPVS. Residues 596-613 show a composition bias toward low complexity; the sequence is AGTTKPAPAAGATATAEN. Residues 633–647 are compositionally biased toward basic residues; sequence SWFKRMKKSFGKLFH.

In terms of biological role, has a role in meiosis and sporulation. The chain is Meiotically up-regulated protein C8C9.04 from Schizosaccharomyces pombe (strain 972 / ATCC 24843) (Fission yeast).